We begin with the raw amino-acid sequence, 97 residues long: Co-chaperonin GroES (97 aa).

The protein belongs to the GroES chaperonin family. Heptamer of 7 subunits arranged in a ring. Interacts with the chaperonin GroEL.

The protein resides in the cytoplasm. Functionally, together with the chaperonin GroEL, plays an essential role in assisting protein folding. The GroEL-GroES system forms a nano-cage that allows encapsulation of the non-native substrate proteins and provides a physical environment optimized to promote and accelerate protein folding. GroES binds to the apical surface of the GroEL ring, thereby capping the opening of the GroEL channel. The polypeptide is Co-chaperonin GroES (Photorhabdus laumondii subsp. laumondii (strain DSM 15139 / CIP 105565 / TT01) (Photorhabdus luminescens subsp. laumondii)).